A 287-amino-acid chain; its full sequence is Glycine--tRNA ligase alpha subunit (287 aa).

It belongs to the class-II aminoacyl-tRNA synthetase family. As to quaternary structure, tetramer of two alpha and two beta subunits.

The protein localises to the cytoplasm. It catalyses the reaction tRNA(Gly) + glycine + ATP = glycyl-tRNA(Gly) + AMP + diphosphate. The chain is Glycine--tRNA ligase alpha subunit from Campylobacter jejuni subsp. doylei (strain ATCC BAA-1458 / RM4099 / 269.97).